Here is a 147-residue protein sequence, read N- to C-terminus: MKLVLQRVKEASVSIDGKIAGAINQGLLLLVGVGPDDNAEDLAYAVRKIVNMRIFSDADGKMNQSIQDIKGSILSVSQFTLYADTKKGNRPAFTGAAKPDLASQLYDSFNEQLAEFVPVERGVFGADMQVSLINDGPVTIILDTKCH.

Residues 136–137 (GP) carry the Gly-cisPro motif, important for rejection of L-amino acids motif.

This sequence belongs to the DTD family. Homodimer.

It is found in the cytoplasm. It carries out the reaction glycyl-tRNA(Ala) + H2O = tRNA(Ala) + glycine + H(+). It catalyses the reaction a D-aminoacyl-tRNA + H2O = a tRNA + a D-alpha-amino acid + H(+). An aminoacyl-tRNA editing enzyme that deacylates mischarged D-aminoacyl-tRNAs. Also deacylates mischarged glycyl-tRNA(Ala), protecting cells against glycine mischarging by AlaRS. Acts via tRNA-based rather than protein-based catalysis; rejects L-amino acids rather than detecting D-amino acids in the active site. By recycling D-aminoacyl-tRNA to D-amino acids and free tRNA molecules, this enzyme counteracts the toxicity associated with the formation of D-aminoacyl-tRNA entities in vivo and helps enforce protein L-homochirality. The protein is D-aminoacyl-tRNA deacylase of Streptococcus pyogenes serotype M1.